The primary structure comprises 281 residues: Microtubule-associated protein RP/EB family member 3 (281 aa).

Residues 14-116 (NLSRHDMLAW…FIQWFKKFFD (103 aa)) enclose the Calponin-homology (CH) domain. 2 disordered regions span residues 157 to 181 (VPQR…VAPP) and 260 to 281 (EGFA…QDEY). The span at 158–175 (PQRTSPTGPKNMQTSGRL) shows a compositional bias: polar residues. Phosphoserine occurs at positions 162 and 176. Residues 194–264 (GGHEADAQIL…LYATEEGFAP (71 aa)) enclose the EB1 C-terminal domain. Residues 217 to 260 (DGLEKERDFYFSKLRDIELICQEHESENSPVISGIIGILYATEE) are APC-binding. The DCTN1-binding stretch occupies residues 217 to 281 (DGLEKERDFY…EHQQEDQDEY (65 aa)). A compositionally biased stretch (basic and acidic residues) spans 272 to 281 (EHQQEDQDEY).

It belongs to the MAPRE family. In terms of assembly, homodimer. Heterodimer with MAPRE1. Binds monomeric and polymerized GTP-bound tubulin. Interacts with DCTN1 and SRCIN1. Binds to the C-terminal domain of APC. Interacts (via C-terminus) with CLIP1. Interacts with SLAIN2. Interacts with SLAIN1. Interacts with APC2. Interacts with AKAP9. Interacts with PDE4DIP isoform 2/MMG8/SMYLE; this interaction is required for its recruitment to the Golgi apparatus.

The protein resides in the cytoplasm. It is found in the cytoskeleton. Plus-end tracking protein (+TIP) that binds to the plus-end of microtubules and regulates the dynamics of the microtubule cytoskeleton. Promotes microtubule growth. May be involved in spindle function by stabilizing microtubules and anchoring them at centrosomes. Also acts as a regulator of minus-end microtubule organization: interacts with the complex formed by AKAP9 and PDE4DIP, leading to recruit CAMSAP2 to the Golgi apparatus, thereby tethering non-centrosomal minus-end microtubules to the Golgi, an important step for polarized cell movement. Promotes elongation of CAMSAP2-decorated microtubule stretches on the minus-end of microtubules. This chain is Microtubule-associated protein RP/EB family member 3 (Mapre3), found in Mus musculus (Mouse).